We begin with the raw amino-acid sequence, 794 residues long: Phospholipase A-2-activating protein (794 aa).

WD repeat units lie at residues 17-56 (HELD…RGFT), 63-107 (GHSN…PLYI), 110-148 (GHKD…MTLQ), 149-188 (GHTA…RTFL), 190-227 (HEDC…LEVY), 229-268 (GHTN…QTIR), and 270-307 (PAQS…TASA). Position 50 is a phosphoserine (serine 50). Residues 366–465 (QWSVSDGRWI…KGQTLGLGNT (100 aa)) enclose the PFU domain. Lysine 529 bears the N6-acetyllysine mark. The 261-residue stretch at 533 to 793 (IYFPKKEALT…SECCRLVLHL (261 aa)) folds into the PUL domain. ARM repeat units follow at residues 546-588 (ANPT…NNSS), 589-620 (EKPT…LRLS), 621-668 (IKHP…CFVS), 669-714 (QAGQ…CFHK), 715-754 (DHNI…LISD), and 755-794 (DSNA…LHLL).

Belongs to the WD repeat PLAP family. Interacts with ubiquitin. Interacts with UBXN6, VCP and YOD1; may form a complex involved in macroautophagy. Expressed in the brain, with highest levels in hippocampal neurons, cerebellar granular cell layer and Purkinje cells.

It is found in the nucleus. It localises to the cytoplasm. Its subcellular location is the synapse. Functionally, plays a role in protein ubiquitination, sorting and degradation through its association with VCP. Involved in ubiquitin-mediated membrane proteins trafficking to late endosomes in an ESCRT-dependent manner, and hence plays a role in synaptic vesicle recycling. May play a role in macroautophagy, regulating for instance the clearance of damaged lysosomes. Plays a role in cerebellar Purkinje cell development. Positively regulates cytosolic and calcium-independent phospholipase A2 activities in a tumor necrosis factor alpha (TNF-alpha)- or lipopolysaccharide (LPS)-dependent manner, and hence prostaglandin E2 biosynthesis. The protein is Phospholipase A-2-activating protein (Plaa) of Mus musculus (Mouse).